The chain runs to 204 residues: Protein GrpE (204 aa).

A disordered region spans residues 1 to 55; sequence MSSKNNPESETKAKNKWEKVMEAEEEQEEGRGDGSQEMEPHREGLEFPSREKLEG. 2 stretches are compositionally biased toward basic and acidic residues: residues 7 to 22 and 29 to 55; these read PESETKAKNKWEKVME and EGRGDGSQEMEPHREGLEFPSREKLEG.

This sequence belongs to the GrpE family. In terms of assembly, homodimer.

Its subcellular location is the cytoplasm. Participates actively in the response to hyperosmotic and heat shock by preventing the aggregation of stress-denatured proteins, in association with DnaK and GrpE. It is the nucleotide exchange factor for DnaK and may function as a thermosensor. Unfolded proteins bind initially to DnaJ; upon interaction with the DnaJ-bound protein, DnaK hydrolyzes its bound ATP, resulting in the formation of a stable complex. GrpE releases ADP from DnaK; ATP binding to DnaK triggers the release of the substrate protein, thus completing the reaction cycle. Several rounds of ATP-dependent interactions between DnaJ, DnaK and GrpE are required for fully efficient folding. The protein is Protein GrpE of Coxiella burnetii (strain RSA 331 / Henzerling II).